Here is a 428-residue protein sequence, read N- to C-terminus: GTPase Obg (428 aa).

In terms of domain architecture, Obg spans 1–158; the sequence is MFVDQVKVYV…RYIVLELKVL (158 aa). Residues 117 to 143 form a disordered region; that stretch reads ARGGRGGRGNSRFATPANPAPQLSENG. The OBG-type G domain maps to 159 to 329; sequence ADVGLVGFPS…LLFEVANQLE (171 aa). GTP-binding positions include 165 to 172, 190 to 194, 212 to 215, 282 to 285, and 310 to 312; these read GFPSVGKS, FTTLV, DLPG, NKMD, and SAV. Ser-172 and Thr-192 together coordinate Mg(2+). The region spanning 350 to 428 is the OCT domain; that stretch reads TMENEEVPFN…LLEFEFEFID (79 aa).

The protein belongs to the TRAFAC class OBG-HflX-like GTPase superfamily. OBG GTPase family. In terms of assembly, monomer. Interacts with TasA (AC P54507) in pull-down experiments. Requires Mg(2+) as cofactor.

It localises to the cytoplasm. Inhibited by GDP; less than 20 uM ppGpp stimulates the GTPase, while higher concentrations inhibit. Its function is as follows. Necessary for the transition from vegetative growth to stage 0 or stage II of sporulation, but sporulation subsequent to these stages is unaffected at 45 degrees Celsius. This ts effect is probably due solely to the E-79 mutation. Required for expression of early sporulation genes, further suggesting a role in the induction of sporulation. Depletion effects on sporulation can be partially suppressed by missense mutations in spo0A. Strains depleted for obg stop growing after about 3 hours and do not induce the sigma-B factor following ethanol stress. It cofractionates with the ribosome and upstream stress response regulators RsbR, RsbS and RsbT in size fractionation columns, suggesting the ribosome might serve as a possible mediator of the activity of obg and the stress induction of sigma-B. In glycerol gradients partially associates with ribosomes; this is stabilized by a nonhydrolyzable GTP-analog and to a lesser extent GTP and GDP. In terms of biological role, an essential GTPase which binds GTP, GDP and possibly (p)ppGpp with moderate affinity, with high nucleotide exchange rates and a fairly low GTP hydrolysis rate. Plays a role in control of the cell cycle, stress response, ribosome biogenesis and in those bacteria that undergo differentiation, in morphogenesis control. In Bacillus subtilis (strain 168), this protein is GTPase Obg.